A 611-amino-acid polypeptide reads, in one-letter code: Glutamine--fructose-6-phosphate aminotransferase [isomerizing] (611 aa).

The Nucleophile; for GATase activity role is filled by cysteine 2. The region spanning 2-219 is the Glutamine amidotransferase type-2 domain; that stretch reads CGIVGGVSKT…DGDVAMLQRQ (218 aa). SIS domains are found at residues 287–427 and 460–601; these read AAAM…APGA and WAAR…VDRP. Lysine 606 acts as the For Fru-6P isomerization activity in catalysis.

As to quaternary structure, homodimer.

Its subcellular location is the cytoplasm. It carries out the reaction D-fructose 6-phosphate + L-glutamine = D-glucosamine 6-phosphate + L-glutamate. In terms of biological role, catalyzes the first step in hexosamine metabolism, converting fructose-6P into glucosamine-6P using glutamine as a nitrogen source. This is Glutamine--fructose-6-phosphate aminotransferase [isomerizing] from Acidithiobacillus ferridurans.